The chain runs to 105 residues: Small ribosomal subunit protein uS10 (105 aa).

It belongs to the universal ribosomal protein uS10 family. Part of the 30S ribosomal subunit.

Its function is as follows. Involved in the binding of tRNA to the ribosomes. The sequence is that of Small ribosomal subunit protein uS10 from Francisella philomiragia subsp. philomiragia (strain ATCC 25017 / CCUG 19701 / FSC 153 / O#319-036).